The sequence spans 388 residues: Quinolone resistance protein NorA (388 aa).

12 helical membrane passes run I5 to V25, L42 to A62, L69 to H89, V99 to I119, F129 to F149, M157 to I177, W201 to F221, D239 to F259, L269 to A289, W293 to I313, L331 to F351, and I355 to I375.

This sequence belongs to the major facilitator superfamily. TCR/Tet family.

Its subcellular location is the cell membrane. In terms of biological role, involved in quinolone resistance. May constitute a membrane-associated active efflux pump of hydrophilic quinolones. This chain is Quinolone resistance protein NorA (norA), found in Staphylococcus aureus (strain Mu50 / ATCC 700699).